The sequence spans 530 residues: MFS transporter PfmaC (530 aa).

The segment at 41 to 76 (TTAVSDGDNQSSTMSGKTAAGDATSPASGSGSGGWF) is disordered. Over residues 42-56 (TAVSDGDNQSSTMSG) the composition is skewed to polar residues. Residues 59–69 (AAGDATSPASG) show a composition bias toward low complexity. 10 helical membrane-spanning segments follow: residues 165 to 182 (YWLPACLMTWSAFVLGMY), 195 to 215 (FFIGLFEGAAWPGITYTLGCW), 226 to 246 (ALFVMSGVLGQMFSGYLQAAL), 261 to 281 (WLFIFDFILAVPIAIYGLFCF), 324 to 344 (IFTSWQVYAFTLGYALWSLTV), 369 to 389 (NIPTALGAVNFVTMLTTGFVS), 396 to 416 (GPVCLAVGCVLIFTYSIFTAW), 422 to 442 (LLMAVFILNGVYGCYTPLLAG), 456 to 476 (AFILGLMTSVGGAVVIPFQQL), and 493 to 513 (PSALAFVIALTCWTGLGIPLL).

This sequence belongs to the major facilitator superfamily. Allantoate permease family.

The protein resides in the cell membrane. Its function is as follows. MFS transporter; part of the gene cluster that mediates the biosynthesis of dihydroxynaphthalene (DHN)-melanin, a bluish-green pigment forming a dark layer in the conidial wall that protects the conidia from UV radiations. In Pestalotiopsis fici (strain W106-1 / CGMCC3.15140), this protein is MFS transporter PfmaC.